The chain runs to 293 residues: Phosphatidylglycerol--prolipoprotein diacylglyceryl transferase (293 aa).

The next 4 helical transmembrane spans lie at 45 to 65, 81 to 101, 115 to 135, and 144 to 164; these read FELRWYSTLILMGFLISYFVA, ELIFYGVIAGIVGARLYYVLF, IWEGGLAIHGAVIGALLTGFL, and FTFLQATDLFTSVLPLGQAIG. Residue Arg165 participates in a 1,2-diacyl-sn-glycero-3-phospho-(1'-sn-glycerol) binding. 3 helical membrane-spanning segments follow: residues 204-224, 231-249, and 262-282; these read PTFLYESIWDLLVFFMLSVYF, HGEVTCLYFVLYSLGRIVI, and IKAAQLLSAVLILLGFTGFLI.

It belongs to the Lgt family.

Its subcellular location is the cell inner membrane. The enzyme catalyses L-cysteinyl-[prolipoprotein] + a 1,2-diacyl-sn-glycero-3-phospho-(1'-sn-glycerol) = an S-1,2-diacyl-sn-glyceryl-L-cysteinyl-[prolipoprotein] + sn-glycerol 1-phosphate + H(+). The protein operates within protein modification; lipoprotein biosynthesis (diacylglyceryl transfer). In terms of biological role, catalyzes the transfer of the diacylglyceryl group from phosphatidylglycerol to the sulfhydryl group of the N-terminal cysteine of a prolipoprotein, the first step in the formation of mature lipoproteins. This chain is Phosphatidylglycerol--prolipoprotein diacylglyceryl transferase, found in Thermotoga maritima (strain ATCC 43589 / DSM 3109 / JCM 10099 / NBRC 100826 / MSB8).